Here is a 148-residue protein sequence, read N- to C-terminus: Small ribosomal subunit protein eS19 (148 aa).

The protein belongs to the eukaryotic ribosomal protein eS19 family.

This chain is Small ribosomal subunit protein eS19 (rps19), found in Dictyostelium discoideum (Social amoeba).